The following is a 229-amino-acid chain: MQPLEVGLVPAPAGEPRLTRWLRRGSGILAHLVALGFTIFLTALSRPGTSLFSWHPVFMALAFCLCMAEAILLFSPEHSLFFFCSRKARIRLHWAGQTLAILCAALGLGFIISSRTRSELPHLVSWHSWVGALTLLATAVQALCGLCLLCPRAARVSRVARLKLYHLTCGLVVYLMATVTVLLGMYSVWFQAQIKGAAWYLCLALPVYPALVIMHQISRSYLPRKKMEM.

Residues 1–24 (MQPLEVGLVPAPAGEPRLTRWLRR) lie on the Cytoplasmic side of the membrane. The Cytochrome b561 domain maps to 22–224 (LRRGSGILAH…HQISRSYLPR (203 aa)). The helical transmembrane segment at 25–45 (GSGILAHLVALGFTIFLTALS) threads the bilayer. Residues 46 to 53 (RPGTSLFS) are Lumenal-facing. The helical transmembrane segment at 54 to 74 (WHPVFMALAFCLCMAEAILLF) threads the bilayer. Heme b is bound at residue H55. The Cytoplasmic segment spans residues 75–91 (SPEHSLFFFCSRKARIR). A helical membrane pass occupies residues 92-112 (LHWAGQTLAILCAALGLGFII). Residues H93 and H127 each coordinate heme b. Over 113–128 (SSRTRSELPHLVSWHS) the chain is Lumenal. A helical membrane pass occupies residues 129–149 (WVGALTLLATAVQALCGLCLL). The Cytoplasmic segment spans residues 150-169 (CPRAARVSRVARLKLYHLTC). A heme b-binding site is contributed by H166. A helical membrane pass occupies residues 170–190 (GLVVYLMATVTVLLGMYSVWF). At 191-193 (QAQ) the chain is on the lumenal side. A helical transmembrane segment spans residues 194-214 (IKGAAWYLCLALPVYPALVIM). The Cytoplasmic portion of the chain corresponds to 215–229 (HQISRSYLPRKKMEM).

The cofactor is heme b.

The protein resides in the membrane. The enzyme catalyses monodehydro-L-ascorbate radical(out) + L-ascorbate(in) = monodehydro-L-ascorbate radical(in) + L-ascorbate(out). It carries out the reaction Fe(3+)(out) + L-ascorbate(in) = monodehydro-L-ascorbate radical(in) + Fe(2+)(out) + H(+). Its function is as follows. Probable transmembrane reductase that may use ascorbate as an electron donor and transfer electrons across membranes to reduce monodehydro-L-ascorbate radical and iron cations Fe(3+) in another cellular compartment. The protein is Probable transmembrane reductase CYB561D1 of Homo sapiens (Human).